Reading from the N-terminus, the 52-residue chain is Large ribosomal subunit protein bL33 (52 aa).

Belongs to the bacterial ribosomal protein bL33 family.

The polypeptide is Large ribosomal subunit protein bL33 (Anaeromyxobacter sp. (strain Fw109-5)).